We begin with the raw amino-acid sequence, 462 residues long: Lysophospholipid acyltransferase 1 (462 aa).

9 consecutive transmembrane segments (helical) span residues 9 to 29 (SIGV…TIPV), 52 to 72 (FLSY…PMTI), 84 to 104 (CGII…VFYM), 158 to 178 (SLIE…GPVY), 211 to 231 (AILQ…QYPL), 263 to 283 (YFIW…FSGW), 353 to 373 (AVWH…ALMI), 396 to 416 (IMVF…AVGF), and 431 to 451 (VYYI…VVPA). The active site involves H356.

It belongs to the membrane-bound acyltransferase family. In terms of tissue distribution, expressed in roots, rosette leaves, petals, stigma, chalazal endosperm of developing seeds and vascular bundles of siliques.

It localises to the endoplasmic reticulum membrane. The catalysed reaction is a 1-acyl-sn-glycero-3-phosphocholine + an acyl-CoA = a 1,2-diacyl-sn-glycero-3-phosphocholine + CoA. It catalyses the reaction 1-(9Z-octadecenoyl)-sn-glycero-3-phosphocholine + (9Z)-octadecenoyl-CoA = 1,2-di-(9Z-octadecenoyl)-sn-glycero-3-phosphocholine + CoA. It carries out the reaction 1-(9Z-octadecenoyl)-sn-glycero-3-phosphocholine + (9Z,12Z)-octadecadienoyl-CoA = 1-(9Z)-octadecenoyl-2-(9Z,12Z)-octadecadienoyl-sn-glycero-3-phosphocholine + CoA. The enzyme catalyses (9Z,12Z,15Z)-octadecatrienoyl-CoA + 1-(9Z-octadecenoyl)-sn-glycero-3-phosphocholine = 1-(9Z-octadecaenoyl)-2-(9Z,12Z,15Z-octadecatrienoyl)-sn-glycero-3-phosphocholine + CoA. The catalysed reaction is a 1-acyl-sn-glycero-3-phosphoethanolamine + an acyl-CoA = a 1,2-diacyl-sn-glycero-3-phosphoethanolamine + CoA. It catalyses the reaction a 1-acyl-sn-glycero-3-phospho-L-serine + an acyl-CoA = a 1,2-diacyl-sn-glycero-3-phospho-L-serine + CoA. Functionally, lysophospholipid acyltransferase with broad specificity. Mediates the conversion of lysophosphatidylethanolamine (1-acyl-sn-glycero-3-phosphoethanolamine or LPE) into phosphatidylethanolamine (1,2-diacyl-sn-glycero-3-phosphoethanolamine or PE) (LPEAT activity). Catalyzes the acylation of lysophosphatidylserine (1-acyl-2-hydroxy-sn-glycero-3-phospho-L-serine or LPS) into phosphatidylserine (1,2-diacyl-sn-glycero-3-phospho-L-serine or PS) (LPSAT activity). Can convert lysophosphatidylcholine (1-acyl-sn-glycero-3-phosphocholine or LPC) into phosphatidylcholine (1,2-diacyl-sn-glycero-3-phosphocholine or PC) (LPCAT activity). Exhibits preference for C18-unsaturated acyl-CoA when transferring an acyl group to lysophosphatidylcholine. Can also utilize lysophosphatidylglycerol (LPG) as substrate in vitro. Has neither activity towards lysophosphatidic acid (LPA) nor lysophosphatidylinositol (LPI). Lysophospholipid acyltransferases catalyze the reacylation step of the phospholipid remodeling pathway also known as the Lands cycle. The primary function of the Lands cycle is to provide a route for acyl remodeling to modify fatty acid (FA) composition of phospholipids derived from the Kennedy pathway. Is involved in PC acyl editing and phosphocholine headgroup exchange between PC and diacylglycerols. This processes control the majority of acyl fluxes through PC to provide polyunsaturated fatty acids for triacylglycerols synthesis in seeds. Involved with LPCAT2 in the direct incorporation of newly synthesized fatty acids exported form the chloroplast into PC through acyl editing. In Arabidopsis thaliana (Mouse-ear cress), this protein is Lysophospholipid acyltransferase 1.